A 194-amino-acid polypeptide reads, in one-letter code: Calcium channel flower (194 aa).

Topologically, residues Met1–Leu34 are cytoplasmic. The helical transmembrane segment at Leu35–Ile55 threads the bilayer. The Extracellular portion of the chain corresponds to Thr56–Gly65. The chain crosses the membrane as a helical span at residues Ile66 to Gly88. Topologically, residues Gln89–Ala106 are cytoplasmic. Residues Gly107 to Phe127 traverse the membrane as a helical segment. The Extracellular portion of the chain corresponds to Gly128–Val194. Important for promoting apoptosis regions lie at residues Thr135–Ala157 and Thr135–Ser192.

This sequence belongs to the calcium channel flower family. Associates with the dally/ magu complex. In terms of assembly, homomultimer. Associates with the dally/ magu complex. As to expression, detected in the imaginal wing disk (at protein level). Detected throughout the adult brain, including the optic lobe but, at much lower levels of expression than isoform Lose-A. In terms of tissue distribution, detected in the optic lobe (at protein level). Detected throughout the adult brain, including the optic lobe. Expressed in damaged and undamaged optic lobe neurons. As to expression, expressed in optic lobe neurons, with higher levels of expression in suboptimal neurons. Specifically expressed in injury-damaged optic lobe neurons.

The protein resides in the cell membrane. Its subcellular location is the cytoplasmic vesicle. The protein localises to the secretory vesicle. It localises to the synaptic vesicle membrane. It is found in the presynaptic cell membrane. The protein resides in the endosome. Its subcellular location is the synaptic vesicle. Its activity is regulated as follows. Channel activity is inhibited by La(3+), which reduces Ca(2+) influx and thus inhibits it's function in promoting activity-dependent bulk endocytosis (ADBE) in response to high stimuli. Transmembrane protein which mediates synaptic endocytosis, fitness-based cell culling, neuronal culling, morphogen gradient scaling, and calcium transport. Regulates synaptic endocytosis and hence couples exo- with endocytosis. Controls two major modes of synaptic vesicle (SV) endocytosis in the synaptic boutons of neuromuscular junctions (NMJs); Ca(2+) channel-independent Clathrin-mediated endocytosis (CME) in response to mild stimulation, and Ca(2+) channel-dependent activity-dependent bulk endocytosis (ADBE) in response to strong stimulation. Functions in ADBE and subsequent SV reformation from bulk endosomes by initiating Ca(2+) channel-dependent phosphatidylinositol 4,5-bisphosphate (PtdIns(4,5)P2) compartmentalization in synaptic boutons. There it acts at the periactive zone to provide the low Ca(2+) levels required to initiate Calcineurin activation and upregulate PtdIns(4,5)P2. Conversely PtdIns(4,5)P2 enhances fwe Ca(2+) channel-activity, establishing a positive feedback loop that induces PtdIns(4,5)P2 microdomain at the periactive zone. These microdomains trigger bulk membrane invagination (i.e. ADBE) by triggering actin polymerization while also promoting localization of fwe to bulk endosomes, thereby removing the ADBE trigger to reduce endocytosis and prevent excess membrane uptake. PtdIns(4,5)P2 then promotes SV reformation from the bulk endosomes, to coordinate ADBE and subsequent SV reformation. Different combinations of the flower isoforms at the cell membrane are also required for the identification and elimination of suboptimal or supernumerary cells during development, regeneration, and adulthood. Required for the recognition and elimination of unfit cells in the developing wing during cell competition. Also required for efficient identification and elimination of injured, damaged and/or dysfunctional neurons during regeneration of the adult brain. In the developing pupal retina, mediates the elimination of unwanted postmitotic neurons, including supernumerary photoreceptor neurons that form at the periphery of the retina and are contained within incomplete ommatidia units. Downstream of the flower fitness fingerprints, cells identified as unwanted or unfit are eliminated via apoptosis through the expression of ahuizotl (azot). However, the cells marked for elimination by the flower isoforms only undergo apoptosis if additional thresholds are met; (1) their neighboring fit/healthy cells express different levels of the fwe isoforms, and (2) the levels of the protective signal SPARC expressed by the loser or unwanted cells are unable to inhibit caspase activation. These additional thresholds for flower-mediated apoptosis, allows useful cells to recover from transient and limited stress before they are unnecessarily eliminated. Functions with dally and magu in a mechanism of scaling, which utilises apoptosis to ensure that the dpp morphogen gradient, which mediates organ growth, remains proportional to the size of the growing wing. In this mechanism, fwe represses dally- and Magu-dependent activity in expanding the gradient, and dally/Magu inhibits fwe-dependent apoptosis to keep cell death rate low. When the levels of these different proteins are optimally regulated the gradient correctly scales with organ growth but when this fails, fwe-mediated apoptosis is activated to trim the developing tissue to match the correct size of the gradient. Functionally, functions with the other flower isoforms to produce tissue-specific fitness fingerprints that identify unfit or fit cells during cell selection processes in order to maintain tissue health. In the wing imaginal disk, this isoform is highly expressed in healthy/normal cells but is down-regulated in cells with decreased fitness. During cell competition, if levels of this isoform in unfit cells is lower than in the surrounding neighboring cells, the suboptimal cells are recognized as 'loser' cells, and undergo elimination via apoptosis to be replaced by the surrounding healthy 'winner' cell population. Its function is as follows. Functions with the other flower isoforms to produce tissue-specific fitness fingerprints that identify unfit or fit cells during cell selection processes in order to maintain tissue health. In the wing imaginal disk, this isoform displays low levels of expression in healthy/normal cells but is up-regulated in cells with decreased fitness. During cell competition, if levels of this isoform in unfit cells is higher than in the surrounding neighboring cells, the suboptimal cells are recognized as 'loser' cells, and undergo elimination via apoptosis to be replaced by the surrounding healthy 'winner' cell population. In terms of biological role, functions with the other flower isoforms to produce tissue-specific fitness fingerprints that identify unfit cells for cell selection processes during development, regeneration, and to maintain tissue health. During cell competition in certain tissues, marks suboptimal or damaged cells as 'loser' cells. In cells of the wing imaginal disk and damaged or dysfunctional neurons in the adult optic lobe, this isoform displays low to no expression in healthy/normal cells but is up-regulated in cells with decreased fitness or damage-affected neurons. During cell competition, if levels of this isoform in unfit cells is higher than in the surrounding neighboring cells, the suboptimal cells are recognized as 'loser' cells, and undergo elimination via apoptosis to be replaced by the surrounding healthy/undamaged 'winner' cell population. In the developing pupal retina, also required for the recognition and elimination of postmitotic neurons, including supernumerary photoreceptor neurons that form at the periphery of the retina and are contained within incomplete ommatidia units. Activity at the peripheral retina is induced by the wg signaling pathway but, once activated, it promotes apoptosis of supernumerary photoreceptor neurons independently of wg signaling and snail function. This is Calcium channel flower (fwe) from Drosophila melanogaster (Fruit fly).